Here is a 1073-residue protein sequence, read N- to C-terminus: Serine/threonine-protein phosphatase 6 regulatory ankyrin repeat subunit C (1073 aa).

ANK repeat units lie at residues 7-36 (TDQPPLVQAIFNRDVEEVRSLLNQKENINV), 40-69 (ERRTPLHTAAYIGDVAILELLILSGANVNA), 73-102 (VWLTPLHRAAASRNEKALHLLLKHSADVNA), 106-135 (YWQTPLHVAAANRATKCVEAIIPLLSTVNV), 139-168 (TGRTALHHAVHSGHLEMVNLLLNKGASLST), 172-201 (KDRQPIHWAAFLGHLEVLKLLVARGADVMC), 205-234 (KGYTLLHTAAASGQIEVVRHLLRLGVEIDE), 238-267 (FGNTALHIACYMGQDAVANELVNYGANVNQ), 271-301 (KGFTPLHFAAVSTNGALCLELLVNNGADVNF), 305-334 (EGKSPLHMAAIHGRFTRSQILIQNGSEIDC), 338-367 (YGNTPLHVAARYGHELLISTLMTNGADTAR), 371-400 (HDMFPLHLAVLFGFSDCCRKLLSSGQLYSI), 422-451 (LGRTCLHAAASGGNVECLNLLLSSGADLRR), 455-484 (FGRTPLHYAAANGSYQCTVTLVTAGASINE), 488-544 (KGCT…DPSL), 548-578 (QGYTAVHYAAAYGNRQNLELLLEMSFNCLED), 583-612 (IPVSPLHLAAYNGHCEALKTLAETLVNLDV), 616-645 (KGRTALYLATERGSTECVEVLTSHGASALV), 650-679 (RKWTPLHAAAANGNTDSLHLLIDSGERADI), 686-715 (HGQTPLMLAIMNGHVDCVHLLLEKGSTADA), 719-748 (RGRTALHRGAVTGCEDCLAALLDHDAFVLC), 752-781 (KGRTPIHFASACGHLEILRTLLQAALSTDP), 789-818 (SGYSPMHWASYSGHEDCLELLLEHNPFAYL), 821-851 (NPFTPLHCAVINNQDSTAEMLVEALGAKIVN), 856-885 (KGRTPLHAAAFADNIHGLQLLLRHQAEVDT), 889-919 (LGRTPLMMASENGHTAAVEFLLYQAKANITV), 923-952 (NKNTALHLACSKGHEKCALLILGETQDLGL), and 959-988 (ALQMPLHIAARNGLATVVQALLSRGATVLA).

As to quaternary structure, protein phosphatase 6 (PP6) holoenzyme is proposed to be a heterotrimeric complex formed by the catalytic subunit, a SAPS domain-containing subunit (PP6R) and an ankyrin repeat-domain containing regulatory subunit (ARS).

Its function is as follows. Putative regulatory subunit of protein phosphatase 6 (PP6) that may be involved in the recognition of phosphoprotein substrates. The sequence is that of Serine/threonine-protein phosphatase 6 regulatory ankyrin repeat subunit C (ANKRD52) from Gallus gallus (Chicken).